We begin with the raw amino-acid sequence, 405 residues long: Glycosylated lysosomal membrane protein A (405 aa).

Positions 1–25 are cleaved as a signal peptide; that stretch reads MGCTRGWRLLLLLGLVCVGALQGRG. Residues 26 to 365 are Lumenal-facing; the sequence is QEESREVSLQ…YGEPPRDSFS (340 aa). Asparagine 55, asparagine 86, asparagine 125, asparagine 129, asparagine 143, asparagine 153, asparagine 157, asparagine 164, asparagine 169, asparagine 179, asparagine 206, asparagine 222, asparagine 267, asparagine 304, and asparagine 331 each carry an N-linked (GlcNAc...) asparagine glycan. A helical membrane pass occupies residues 366–386; the sequence is ILVICIMAVALGTPLLLLIVG. Topologically, residues 387–405 are cytoplasmic; the sequence is TLVVTALRHKVYSNYEPIN. The Lysosomal targeting motif signature appears at 401–405; that stretch reads YEPIN.

The protein belongs to the GLMP family. In terms of assembly, interacts (via lumenal domain) with lysosomal protein MFSD1; the interaction starts while both proteins are still in the endoplasmic reticulum and is required for stabilization of MFSD1 in lysosomes but has no direct effect on its targeting to lysosomes or transporter activity.

It localises to the lysosome membrane. In terms of biological role, required to protect lysosomal transporter MFSD1 from lysosomal proteolysis and for MFSD1 lysosomal localization. The chain is Glycosylated lysosomal membrane protein A (glmp-a) from Xenopus laevis (African clawed frog).